The following is a 170-amino-acid chain: NADH-quinone oxidoreductase subunit B (170 aa).

Cys-37, Cys-38, Cys-102, and Cys-131 together coordinate [4Fe-4S] cluster.

It belongs to the complex I 20 kDa subunit family. In terms of assembly, NDH-1 is composed of 14 different subunits. Subunits NuoB, C, D, E, F, and G constitute the peripheral sector of the complex. The cofactor is [4Fe-4S] cluster.

The protein localises to the cell inner membrane. The catalysed reaction is a quinone + NADH + 5 H(+)(in) = a quinol + NAD(+) + 4 H(+)(out). Functionally, NDH-1 shuttles electrons from NADH, via FMN and iron-sulfur (Fe-S) centers, to quinones in the respiratory chain. The immediate electron acceptor for the enzyme in this species is believed to be ubiquinone. Couples the redox reaction to proton translocation (for every two electrons transferred, four hydrogen ions are translocated across the cytoplasmic membrane), and thus conserves the redox energy in a proton gradient. The polypeptide is NADH-quinone oxidoreductase subunit B (Geobacter sulfurreducens (strain ATCC 51573 / DSM 12127 / PCA)).